Reading from the N-terminus, the 107-residue chain is U1-lycotoxin-Ls1b (107 aa).

The N-terminal stretch at 1 to 20 (MMKVLVVIALLVTLISYSSS) is a signal peptide. The propeptide occupies 21–41 (EGIDDLEADELLSLMANEQTR). 4 disulfide bridges follow: Cys-44–Cys-59, Cys-51–Cys-68, Cys-58–Cys-86, and Cys-70–Cys-84.

Belongs to the neurotoxin 19 (CSTX) family. 04 (U1-Lctx) subfamily. As to expression, expressed by the venom gland.

It is found in the secreted. The polypeptide is U1-lycotoxin-Ls1b (Lycosa singoriensis (Wolf spider)).